Reading from the N-terminus, the 141-residue chain is Galactose-6-phosphate isomerase subunit LacA (141 aa).

Belongs to the LacAB/RpiB family. Heteromultimeric protein consisting of LacA and LacB.

The catalysed reaction is aldehydo-D-galactose 6-phosphate = keto-D-tagatose 6-phosphate. Its pathway is carbohydrate metabolism; D-galactose 6-phosphate degradation; D-tagatose 6-phosphate from D-galactose 6-phosphate: step 1/1. This Streptococcus equi subsp. equi (strain 4047) protein is Galactose-6-phosphate isomerase subunit LacA.